A 364-amino-acid polypeptide reads, in one-letter code: N-acetyl-gamma-glutamyl-phosphate reductase (364 aa).

The active site involves Cys-157.

Belongs to the NAGSA dehydrogenase family. Type 1 subfamily.

The protein resides in the cytoplasm. The catalysed reaction is N-acetyl-L-glutamate 5-semialdehyde + phosphate + NADP(+) = N-acetyl-L-glutamyl 5-phosphate + NADPH + H(+). It participates in amino-acid biosynthesis; L-arginine biosynthesis; N(2)-acetyl-L-ornithine from L-glutamate: step 3/4. In terms of biological role, catalyzes the NADPH-dependent reduction of N-acetyl-5-glutamyl phosphate to yield N-acetyl-L-glutamate 5-semialdehyde. In Bifidobacterium longum (strain DJO10A), this protein is N-acetyl-gamma-glutamyl-phosphate reductase.